The chain runs to 251 residues: uncharacterized protein (251 aa).

12-21 provides a ligand contact to NADP(+); sequence TGASSQGDIG. S148 lines the substrate pocket. The active-site Proton acceptor is the Y161.

It belongs to the short-chain dehydrogenases/reductases (SDR) family.

This is an uncharacterized protein from Bacillus subtilis (strain 168).